The primary structure comprises 550 residues: Tether containing UBX domain for GLUT4 (550 aa).

A2 is modified (N-acetylalanine). Residues 185-320 (AVRSKAPGSP…EPPVDRDPVV (136 aa)) are disordered. At S193 the chain carries Phosphoserine. The span at 193-206 (SPVSSLSADQASSS) shows a compositional bias: low complexity. A compositionally biased stretch (basic and acidic residues) spans 217-226 (SRGDLNHEGD). The span at 242–252 (DAQTKQSTSEP) shows a compositional bias: polar residues. The segment at 313 to 376 (PVDRDPVVYH…LVTKAFREAQ (64 aa)) is interaction with GLUT4. In terms of domain architecture, UBX spans 382–458 (ERYPKVALRV…NLFPAALVHF (77 aa)). S496 is subject to Phosphoserine. A disordered region spans residues 496 to 550 (SPPLLPAPDPVSLESEPIAEDGALGPPEPIQGTAQPVKRSLGKVPKWLKLPASKR).

As to quaternary structure, interacts with VCP. Interacts with VCPKMT. Interacts with GLUT4. In terms of tissue distribution, ubiquitous.

The protein resides in the endomembrane system. It is found in the endoplasmic reticulum-Golgi intermediate compartment membrane. It localises to the cytoplasm. Its subcellular location is the nucleus. Enhances VCP methylation catalyzed by VCPKMT. Tethering protein that sequesters GLUT4-containing vesicles in the cytoplasm in the absence of insulin. Modulates the amount of GLUT4 that is available at the cell surface. This Mus musculus (Mouse) protein is Tether containing UBX domain for GLUT4 (Aspscr1).